The primary structure comprises 2495 residues: MAEPPKTPGRPVCVVFGPQSSEIDETLFYISRNIDENPSLGFLKDVLQELPSLWSPITDAWSSLSSIPGATQLTVLAECVQGTTAAPKSAMNVFMTPLTVIRQIIDVWKFKEESQNRCRIVDAQGFCVGFLAAVAVASSNDSNEFEDIASTMIRLAVCIGAAVDLDGILHGPARSVALRWKSDSEKEQLDRVLGSSSTAYISCFTDATSVTVTVAEDEVDDLTKELGGHGLSVKIIDLKGRFHHSRHVTAVQYLADLCETDARFRLARTSPCVLPLRSNVDGHVIGKRFAIHKTALESILTKPSQWAITVSAAFEQARETDDDLAFVVIGTGQFVPRLVRTRVLDHLNNKWSDTKQHAILPNGIHRSSSTTRSRPSIDMAPIGPTVIPIAITGMGCRYAQADSPEQLWEMLELGRCGVNALPNERFKMENLLREPKGPFWGNYLANPDVFDHRFFGISAREAEAMDPQQRLLLQVGYEAMESAGYCGLRTSNIPTDVGCYVGVGSDDYTDNVGSSNANAFSATGTLQAFCTGRLSHYFGWTGPSVVVDTACSSAAVSIHLACKALQTNECSIAVAGGVNVMTSPRVTQNLAAASFLSPTGASKAFDASADGYCRGEGAGLVVLRPLKDAIHNGDPILAIIGGSAVNQGSNRSPITVPDSDSQISLYRKALVTSGVRPEDVTYVEAHGTGTQVGDPIEFESIRKTFGRPARTERLYVGSVKDNIGHTETSSGVAGLLKTVLMMQKHQIPKQANFVQLNPKIPTLDDAAIAIPTKSIHWPSAANSSSTAVAMVTNYGAAGSNAALVVKQYKAKSGLSNPVSPLPSEVPVILAANTVESLRSYCKALLSSVCDAQLTSCQDTAYNLAIKQSRDMDYVSAFSIPVDRPNELIAKLESISRETTNLEKQPAARLPVVLCFGGQNGNEATISEDLFNQCELLQYHLTECEKVCQTLDLPSLFPSIFQPGPIEDTVSLHCILFSIQYASAKSWIDSGLQVDRIIGHSFGQLTGLCVGGGLSLSDALYLVSERAKMIHSMWGSERGAMLLVEGSEVEVQGLLNRAAEHMADVAVDVACVNGPRNTILAGDERSLQMIEKLSAKAPSILRTKRLKNTHAFHSRLVDNIVPPLTKVAQQLQYKPLSIPIEACSQYDDWTYVTPGKIVDHSRRRVDFQTAVERVAQRIQGPAIWLEAGSASPIIPLVRRVIDTVAAFSNGHVYQALDLGGALAHRSLSQATCNLWSRGVKVQFWQFHDSQAKSYNWINLPPYQFAQTRHWIGYDPNAFASLPEVKPTVPSSDAPKEFVQLLTKQPTECVFAINTNDPLYQECTQGHAVLDQNLCPASLYFEIIVRAAGLIRPENDISPAMPHLKDLAISAPLVLNPRGNVMLSLTRARVGDSTWSFSLFTRESNKNKVTTHATGEISLHPFGQNTPLFVRLHSMNRLIDSSRVDSIANSRESSGLKGFAVYQAFRRVVNYADYYRGVEQVFATDHEAAGIVNLPSSRTKDASCDPMLVDNFIQVAGIHVNCLSETKEDEVFVCTGVGEILIGEAFMTRDPNCSRSWAVYSNVDRSIKNKITCDTFVLDRETDKLAVTILSATFTSVSIAGLSRVLKKLNNQPDDKKVPLGQSLRDDSKVALNPTPQNALAAVPAPLHSAPDSGHFMVVQEMLCDLLGIASDELLPSSNLEDIGVDSLMRTEVLVEIKKRFNFTIDTSSFVEIPDILTLVQTIFPDAATAPLTNGVHPSLQIETTEAVDSESNTHVIPTPISDEEIHGLIDIAPGLFTDIQRSMVHSQSTQWDGFCESVYPRQMALVTAYVVEAFKSLGVSLESFEAEHLIPQVPVLQQHSKVRSQLYSILQFSNLIRATDHGFVRTSVPVSTISSDVLHEEIIRLYPQHTSEHNLLRTTGSRLSDCLSGAADPLSLLFQDAEARRLMEDVYTNAPMFKAATNHLAQYLVNLLGRVDTTREIKILEIGGGTGGTTKALLSQLTAVPGLRFQYTFTDLSSGLLALARKKFKHYSFMKYQVLNIERAPTPDMLGQYDIVLSSNCVHATRSLVQSCSNINKLLRPDGLLCLIELTRNLFWFDLVFGLLEGWWLFEDGRQHALATEHVWKQTLSQSGFQWVDWTYNDSQESNVLRVITASPTSAVILPPSPRSPLYLMNEETIVYGKNDGVELSADIYYPRDLQPIGKPRPIALLIHGGGHIMLSRRDIRSKQVRMLLNAGFLPVSVDYRLCPEVSLTEGPMHDVCDALCWARHVLPSLTLGRPDIQPDGTQAVAVGWSTGAHLAMTLAWTSQQRGIAPPNAILAFYGPTDYEDSFWSQPNFPYGKNAASPEMRYDLWEGIYETPITAYNPPVDQKALGGWMSPADPRSRIALHMNWKGQSLPMLLHGGRFWSDHKDGDCGEELPVPTLEEIQAVSPLAQIRNGHYKTPTFIIHGTLDDLIPVEQAQRTSQELVTKGVEVQLRVVDKAVHLFDIYPGFEKDQAASRAVEDGYEFLRDHVRY.

The tract at residues 14 to 252 is N-terminal acylcarrier protein transacylase domain (SAT); it reads VVFGPQSSEI…HHSRHVTAVQ (239 aa). The region spanning 386-807 is the Ketosynthase family 3 (KS3) domain; that stretch reads VIPIAITGMG…GSNAALVVKQ (422 aa). Residues Cys551, His686, and His725 each act as for beta-ketoacyl synthase activity in the active site. Positions 913-1222 are malonyl-CoA:ACP transacylase (MAT) domain; the sequence is LCFGGQNGNE…QALDLGGALA (310 aa). Catalysis depends on Ser1000, which acts as the For acyl/malonyl transferase activity. Positions 1294–1422 are N-terminal hotdog fold; sequence KEFVQLLTKQ…GEISLHPFGQ (129 aa). One can recognise a PKS/mFAS DH domain in the interval 1294 to 1601; it reads KEFVQLLTKQ…FTSVSIAGLS (308 aa). A product template (PT) domain region spans residues 1295–1600; sequence EFVQLLTKQP…TFTSVSIAGL (306 aa). Catalysis depends on His1325, which acts as the Proton acceptor; for dehydratase activity. Positions 1450–1601 are C-terminal hotdog fold; it reads ESSGLKGFAV…FTSVSIAGLS (152 aa). The Proton donor; for dehydratase activity role is filled by Asp1508. One can recognise a Carrier domain in the interval 1651–1725; the sequence is SGHFMVVQEM…TLVQTIFPDA (75 aa). Position 1685 is an O-(pantetheine 4'-phosphoryl)serine (Ser1685). Positions 1887 to 2120 are methyltransferase (CMeT) domain; that stretch reads QHTSEHNLLR…GFQWVDWTYN (234 aa). The thioesterase (TE) domain stretch occupies residues 2150-2495; the sequence is YLMNEETIVY…YEFLRDHVRY (346 aa). Catalysis depends on for thioesterase activity residues Ser2273 and Asp2432.

The enzyme catalyses 3 malonyl-CoA + acetyl-CoA + 2 S-adenosyl-L-methionine = 3,5-dimethylorsellinate + 2 S-adenosyl-L-homocysteine + 3 CO2 + 4 CoA. The protein operates within secondary metabolite biosynthesis; terpenoid biosynthesis. Non-reducing polyketide synthase; part of the gene cluster that mediates the biosynthesis of andrastins, meroterpenoid compounds that exhibit inhibitory activity against ras farnesyltransferase, suggesting that they could be promising leads for antitumor agents. The first step of the pathway is the synthesis of 3,5-dimethylorsellinic acid (DMOA) by the polyketide synthase adrD via condensation of one acetyl-CoA starter unit with 3 malonyl-CoA units and 2 methylations. DMAO is then converted to farnesyl-DMAO by the prenyltransferase adrG. The methyltransferase adrK catalyzes the methylation of the carboxyl group of farnesyl-DMAO to farnesyl-DMAO methyl ester which is further converted to epoxyfarnesyl-DMAO methyl ester by the FAD-dependent monooxygenase adrH. The terpene cyclase adrI then catalyzes the carbon skeletal rearrangement to generate the andrastin E, the first compound in the pathway having the andrastin scaffold, with the tetracyclic ring system. The post-cyclization tailoring enzymes adrF, adrE, adrJ, and adrA, are involved in the conversion of andrastin E into andrastin A. The short chain dehydrogenase adrF is responsible for the oxidation of the C-3 a hydroxyl group of andrastin E to yield the corresponding ketone, andrastin D. The ketoreductase adrE stereoselectively reduces the carbonyl moiety to reverse the stereochemistry of the C-3 position to yield andrastin F. The acetyltransferase adrJ is the acetyltransferase that attaches the acetyl group to the C-3 hydroxyl group of andrastin F to yield andrastin C. Finally, the cytochrome P450 monooxygenase adrA catalyzes two sequential oxidation reactions of the C-23 methyl group, to generate the corresponding alcohol andrastin B, and aldehyde andrastin A. This Penicillium roqueforti protein is Non-reducing polyketide synthase adrD.